Here is a 354-residue protein sequence, read N- to C-terminus: Protein sex-lethal (354 aa).

Residues 1 to 20 (MYGNNNPGSNNNNGGYPPYG) are disordered. RRM domains are found at residues 127-205 (TNLI…YARP) and 213-293 (TNLY…LAQE).

Part of a complex containing fl(2)d, Sxl and vir. Interacts with nito. Interacts with Unr; cooperates with Sxl to prevent translation of msl-2 transcripts. Interacts with how; promoting nuclear retention of msl-2 transcripts. As to expression, the embryo-specific isoform is not expressed in the pole cells, which are the progenitors of the germline.

Its subcellular location is the nucleus. It localises to the cytoplasm. Sex determination switch protein, which controls sexual development and dosage compensation in females. Sxl protein is only active in females: it is inactive in males throughout development. Acts as a mRNA-binding protein, which specifically binds to a subset of pre-mRNAs and mRNAs and regulates their processing and/or translation. Promotes sexual development by controlling the female-specific alternative splicing of the transformer (tra) pre-mRNA: binds tightly to a characteristic uridine-rich polypyrimidine tract at the non-sex specific 3' splice site in one of the tra introns, preventing the general splicing factor U2AF from binding to this site and forcing it to bind to the female-specific 3' splice site. Acts as an inhibitor of dosage compensation in females by preventing production of msl-2 protein, an essential component of the MSL complex, the complex that mediates X-chromosome dosage compensation. Specifially binds to uridine stretches in both the 5'- and 3'-UTR of msl-2 transcripts. Sxl first acts at the splicing level by promoting retention of an intron in the 5' UTR of msl-2 pre-mRNA. The retained intron contains Sxl-binding sites that are required for subsequent steps of repression: after msl-2 mRNA export into the cytoplasm, Sxl coordinates its translational repression by targeting early steps of translation initiation. Together with how, Sxl also prevents production of msl-2 protein by preventing nuclear export of msl-2 transcripts. This is Protein sex-lethal from Drosophila subobscura (Fruit fly).